We begin with the raw amino-acid sequence, 228 residues long: Ribulose-phosphate 3-epimerase (228 aa).

Ser-9 serves as a coordination point for substrate. A divalent metal cation-binding residues include His-34, Asp-36, His-68, and Asp-177. Asp-36 acts as the Proton acceptor in catalysis. Residues His-68, 177–179 (DGG), and 199–200 (GS) each bind substrate. The active-site Proton donor is Asp-177.

The protein belongs to the ribulose-phosphate 3-epimerase family. A divalent metal cation serves as cofactor.

It catalyses the reaction D-ribulose 5-phosphate = D-xylulose 5-phosphate. Its pathway is carbohydrate degradation. In terms of biological role, catalyzes the reversible epimerization of D-ribulose 5-phosphate to D-xylulose 5-phosphate. The protein is Ribulose-phosphate 3-epimerase of Buchnera aphidicola subsp. Acyrthosiphon pisum (strain APS) (Acyrthosiphon pisum symbiotic bacterium).